A 262-amino-acid chain; its full sequence is Shikimate dehydrogenase (NADP(+)) (262 aa).

Residues 15–17 and Thr62 contribute to the shikimate site; that span reads SRS. Lys66 acts as the Proton acceptor in catalysis. Glu78 contacts NADP(+). The shikimate site is built by Asn87 and Asp102. NADP(+) contacts are provided by residues 126-130, 150-155, and Met214; these read GAGGA and NRTLAR. Tyr216 provides a ligand contact to shikimate. Gly236 contributes to the NADP(+) binding site.

The protein belongs to the shikimate dehydrogenase family. Homodimer.

It carries out the reaction shikimate + NADP(+) = 3-dehydroshikimate + NADPH + H(+). Its pathway is metabolic intermediate biosynthesis; chorismate biosynthesis; chorismate from D-erythrose 4-phosphate and phosphoenolpyruvate: step 4/7. Its function is as follows. Involved in the biosynthesis of the chorismate, which leads to the biosynthesis of aromatic amino acids. Catalyzes the reversible NADPH linked reduction of 3-dehydroshikimate (DHSA) to yield shikimate (SA). The polypeptide is Shikimate dehydrogenase (NADP(+)) (Acinetobacter baumannii (strain ACICU)).